Consider the following 257-residue polypeptide: MTPFEFRQAVRHRDFRGPTAGHCGDYAQANLAILPAAHAHDFLRFCHANPKPCPLLGVGEPGDFRVPVLGRDIDIRTDVPAYNVYRDGELSERVESIETLWQDDFVVFAIGCSFSFEHMLAKEGIGLRHVEEGRNVPMYRTTIANRRAGVFGGELVVSMRPLRGADAIRAVQITSRFPGVHGAPVHIGDPAELGIADLARPEFGDAVTIRAGELPVYWACGVTPQTALMAAKLPLAIAHAPGHMLMTDITNASLAIF.

This sequence belongs to the D-glutamate cyclase family.

This Paraburkholderia phymatum (strain DSM 17167 / CIP 108236 / LMG 21445 / STM815) (Burkholderia phymatum) protein is Putative hydro-lyase Bphy_2364.